A 463-amino-acid polypeptide reads, in one-letter code: Dipeptidyl peptidase 1 (463 aa).

A signal peptide spans 1–24 (MGVGPASLLAALLLLLSGDRAVRC). Asparagine 29, asparagine 53, and asparagine 119 each carry an N-linked (GlcNAc...) asparagine glycan. 5 disulfide bridges follow: cysteine 30/cysteine 118, cysteine 54/cysteine 136, cysteine 255/cysteine 298, cysteine 291/cysteine 331, and cysteine 321/cysteine 337. A propeptide spanning residues 135–230 (ACFTGKKVGT…TAEIQQKILH (96 aa)) is cleaved from the precursor. Cysteine 258 is an active-site residue. Residue asparagine 276 is glycosylated (N-linked (GlcNAc...) asparagine). 2 residues coordinate chloride: phenylalanine 302 and tyrosine 304. Position 347 (tyrosine 347) interacts with chloride. Residues histidine 405 and asparagine 427 contribute to the active site.

Belongs to the peptidase C1 family. In terms of assembly, tetramer of heterotrimers consisting of exclusion domain, heavy- and light chains. Chloride serves as cofactor.

It localises to the lysosome. The enzyme catalyses Release of an N-terminal dipeptide, Xaa-Yaa-|-Zaa-, except when Xaa is Arg or Lys, or Yaa or Zaa is Pro.. Functionally, thiol protease. Has dipeptidylpeptidase activity. Active against a broad range of dipeptide substrates composed of both polar and hydrophobic amino acids. Proline cannot occupy the P1 position and arginine cannot occupy the P2 position of the substrate. Can act as both an exopeptidase and endopeptidase. Activates serine proteases such as elastase, cathepsin G and granzymes A and B. The sequence is that of Dipeptidyl peptidase 1 (CTSC) from Macaca fascicularis (Crab-eating macaque).